We begin with the raw amino-acid sequence, 1056 residues long: Carbamoyl phosphate synthase large chain (1056 aa).

Positions 1–399 are carboxyphosphate synthetic domain; that stretch reads MKIDVSKVIV…AFQKAIRMLD (399 aa). ATP is bound by residues R127, R167, G173, G174, K206, L208, E213, G239, V240, H241, Q282, and E296. An ATP-grasp 1 domain is found at 131–325; sequence QKTMKKVGLP…LAYIATKLAI (195 aa). Q282, E296, and N298 together coordinate Mg(2+). Mn(2+) is bound by residues Q282, E296, and N298. Residues 400–536 are oligomerization domain; the sequence is IGDELIGKYY…VTYDGVENDI (137 aa). Residues 537–919 form a carbamoyl phosphate synthetic domain region; the sequence is PKPKKPSILV…LKSWLSVKPN (383 aa). An ATP-grasp 2 domain is found at 661–849; that stretch reads SKLLEKLGIP…LMELSAQAVL (189 aa). Residues R697, K736, I738, E742, G766, V767, H768, S769, Q809, and E820 each contribute to the ATP site. 3 residues coordinate Mg(2+): Q809, E820, and N822. 3 residues coordinate Mn(2+): Q809, E820, and N822. In terms of domain architecture, MGS-like spans 915–1043; sequence SVKPNELPKT…REYWIRKIEE (129 aa). The allosteric domain stretch occupies residues 920–1056; sequence ELPKTSALIY…EYAASVVLRR (137 aa).

Belongs to the CarB family. Composed of two chains; the small (or glutamine) chain promotes the hydrolysis of glutamine to ammonia, which is used by the large (or ammonia) chain to synthesize carbamoyl phosphate. Tetramer of heterodimers (alpha,beta)4. The cofactor is Mg(2+). Mn(2+) is required as a cofactor.

The enzyme catalyses hydrogencarbonate + L-glutamine + 2 ATP + H2O = carbamoyl phosphate + L-glutamate + 2 ADP + phosphate + 2 H(+). It carries out the reaction hydrogencarbonate + NH4(+) + 2 ATP = carbamoyl phosphate + 2 ADP + phosphate + 2 H(+). Its pathway is amino-acid biosynthesis; L-arginine biosynthesis; carbamoyl phosphate from bicarbonate: step 1/1. It participates in pyrimidine metabolism; UMP biosynthesis via de novo pathway; (S)-dihydroorotate from bicarbonate: step 1/3. Large subunit of the glutamine-dependent carbamoyl phosphate synthetase (CPSase). CPSase catalyzes the formation of carbamoyl phosphate from the ammonia moiety of glutamine, carbonate, and phosphate donated by ATP, constituting the first step of 2 biosynthetic pathways, one leading to arginine and/or urea and the other to pyrimidine nucleotides. The large subunit (synthetase) binds the substrates ammonia (free or transferred from glutamine from the small subunit), hydrogencarbonate and ATP and carries out an ATP-coupled ligase reaction, activating hydrogencarbonate by forming carboxy phosphate which reacts with ammonia to form carbamoyl phosphate. The chain is Carbamoyl phosphate synthase large chain from Pyrococcus furiosus (strain ATCC 43587 / DSM 3638 / JCM 8422 / Vc1).